Consider the following 263-residue polypeptide: MWELRSASFWRAIFAEFFATLFYVFFGLGASLRWAPGPLHVLQVALAFGLALATLVQAVGHISGAHVNPAVTFAFLVGSQMSLLRAICYVVAQLLGAVAGAAVLYSVTPPAVRGNLALNTLHPGVSVGQATIVEIFLTLQFVLCIFATYDERRNGRLGSVALAVGFSLTLGHLFGMYYTGAGMNPARSFAPAILTRNFTNHWVYWVGPVIGAGLGSLLYDFLLFPRLKSVSERLSILKGTRPSESNGQPEVTGEPVELKTQAL.

Residues 1–12 (MWELRSASFWRA) lie on the Cytoplasmic side of the membrane. Residues 13–30 (IFAEFFATLFYVFFGLGA) form a helical membrane-spanning segment. Topologically, residues 31 to 40 (SLRWAPGPLH) are extracellular. The helical transmembrane segment at 41-59 (VLQVALAFGLALATLVQAV) threads the bilayer. Residues 60–63 (GHIS) lie on the Cytoplasmic side of the membrane. Residues 64–76 (GAHVNPAVTFAFL) constitute an intramembrane region (discontinuously helical). The NPA 1 motif lies at 68 to 70 (NPA). Topologically, residues 77–85 (VGSQMSLLR) are cytoplasmic. A helical membrane pass occupies residues 86-106 (AICYVVAQLLGAVAGAAVLYS). Topologically, residues 107-126 (VTPPAVRGNLALNTLHPGVS) are extracellular. Residues 127-147 (VGQATIVEIFLTLQFVLCIFA) traverse the membrane as a helical segment. At 148–157 (TYDERRNGRL) the chain is on the cytoplasmic side. The helical transmembrane segment at 158 to 175 (GSVALAVGFSLTLGHLFG) threads the bilayer. Over 176–177 (MY) the chain is Extracellular. The discontinuously helical intramembrane region spans 178 to 193 (YTGAGMNPARSFAPAI). Positions 184-186 (NPA) match the NPA 2 motif. The Extracellular segment spans residues 194 to 200 (LTRNFTN). A helical transmembrane segment spans residues 201–218 (HWVYWVGPVIGAGLGSLL). Over 219 to 263 (YDFLLFPRLKSVSERLSILKGTRPSESNGQPEVTGEPVELKTQAL) the chain is Cytoplasmic. The tract at residues 227 to 237 (LKSVSERLSIL) is interaction with CALM. 3 positions are modified to phosphoserine: S235, S243, and S245. Residues 240-263 (TRPSESNGQPEVTGEPVELKTQAL) form a disordered region.

It belongs to the MIP/aquaporin (TC 1.A.8) family. As to quaternary structure, homotetramer; each monomer provides an independent water pore. Two homotetramers on opposing membranes can dimerize, forming a cell-cell junction. Interacts with CALM; the calcium-calmodulin/CALM complex interacts with the cytoplasmic domains of two aquaporins, leading to channel closure. Interacts with BFSP1 (via C-terminus); prevents calcium-dependent inhibition of the water channel activity. Subject to partial proteolytic cleavage in the eye lens core. Partial proteolysis promotes interactions between tetramers from adjoining membranes. In terms of processing, fatty acylated at Met-1 and Lys-238. The acyl modifications, in decreasing order of ion abundance, are: oleoyl (C18:1) &gt; palmitoyl (C16:0) &gt; stearoyl (C18:0) &gt; eicosenoyl (C20:1) &gt; dihomo-gamma-linolenoyl (C20:3) &gt; palmitoleoyl (C16:1) &gt; eicosadienoyl (C20:2). As to expression, detected in eye lens (at protein level).

It localises to the cell membrane. It is found in the cell junction. It catalyses the reaction H2O(in) = H2O(out). The water channel activity is inhibited by calcium through calmodulin/CALM. Functionally, aquaporins form homotetrameric transmembrane channels, with each monomer independently mediating water transport across the plasma membrane along its osmotic gradient. Specifically expressed in lens fiber cells, this aquaporin is crucial for maintaining lens water homeostasis and transparency. Beyond water permeability, it also acts as a cell-to-cell adhesion molecule, forming thin junctions between lens fiber cells that are essential for maintaining the ordered structure and transparency of the lens. In Ovis aries (Sheep), this protein is Lens fiber major intrinsic protein.